The sequence spans 291 residues: Lysosomal amino acid transporter 1 homolog (291 aa).

Residues 1 to 37 (MVWKKLGSRNFSSCPSGSIQWIWDVLGECAQDGWDEA) lie on the Lumenal side of the membrane. Asparagine 10 is a glycosylation site (N-linked (GlcNAc...) asparagine). The PQ-loop 1 domain occupies 34 to 100 (WDEASVGLGL…LADQLPLQTY (67 aa)). Residues 38-58 (SVGLGLISILCFAASTFPQFI) traverse the membrane as a helical segment. Over 59–71 (KAYKTGNMDQALS) the chain is Cytoplasmic. The chain crosses the membrane as a helical span at residues 72-92 (LWFLLGWIGGDSCNLIGSFLA). Topologically, residues 93–98 (DQLPLQ) are lumenal. Residues 99-119 (TYTAVYYVLADLVMLTLYFYY) form a helical membrane-spanning segment. Residues 120–134 (KFRTRPSLLSAPINS) lie on the Cytoplasmic side of the membrane. Residues 135 to 155 (VLLFLMGMACATPLLSAAGPV) form a helical membrane-spanning segment. Topologically, residues 156–182 (AAPREAFRGRALLSVESGSKPFTRQEV) are lumenal. The chain crosses the membrane as a helical span at residues 183 to 203 (IGFVIGSISSVLYLLSRLPQI). The 60-residue stretch at 184–243 (GFVIGSISSVLYLLSRLPQIRTNFLRKSTQGISYSLFALVMLGNTLYGLSVLLKNPEEGQ) folds into the PQ-loop 2 domain. The Cytoplasmic segment spans residues 204 to 214 (RTNFLRKSTQG). The chain crosses the membrane as a helical span at residues 215-235 (ISYSLFALVMLGNTLYGLSVL). Residues 236–254 (LKNPEEGQSEGSYLLHHLP) are Lumenal-facing. Residues 255–275 (WLVGSLGVLLLDTIISIQFLV) traverse the membrane as a helical segment. Residues 276–291 (YRRSTAASELEPLLPS) lie on the Cytoplasmic side of the membrane. The Di-leucine motif signature appears at 288 to 289 (LL).

It belongs to the laat-1 family.

The protein localises to the lysosome membrane. Amino acid transporter that specifically mediates the pH-dependent export of the cationic amino acids arginine, histidine and lysine from lysosomes. This chain is Lysosomal amino acid transporter 1 homolog, found in Homo sapiens (Human).